A 513-amino-acid chain; its full sequence is Galactose-1-phosphate uridylyltransferase (513 aa).

Belongs to the galactose-1-phosphate uridylyltransferase type 2 family.

It is found in the cytoplasm. The enzyme catalyses alpha-D-galactose 1-phosphate + UDP-alpha-D-glucose = alpha-D-glucose 1-phosphate + UDP-alpha-D-galactose. Its pathway is carbohydrate metabolism; galactose metabolism. The polypeptide is Galactose-1-phosphate uridylyltransferase (galT) (Bacillus subtilis (strain 168)).